A 541-amino-acid polypeptide reads, in one-letter code: Chaperonin GroEL (541 aa).

Residues threonine 29–proline 32, aspartate 86–threonine 90, glycine 413, and aspartate 495 contribute to the ATP site.

As to quaternary structure, forms a cylinder of 14 subunits composed of two heptameric rings stacked back-to-back. Interacts with the co-chaperonin GroES.

The protein localises to the cytoplasm. It carries out the reaction ATP + H2O + a folded polypeptide = ADP + phosphate + an unfolded polypeptide.. Together with its co-chaperonin GroES, plays an essential role in assisting protein folding. The GroEL-GroES system forms a nano-cage that allows encapsulation of the non-native substrate proteins and provides a physical environment optimized to promote and accelerate protein folding. The chain is Chaperonin GroEL from Thermoanaerobacter brockii (Thermoanaerobium brockii).